The chain runs to 214 residues: Osteoclast-stimulating factor 1 (214 aa).

Residues 12 to 71 form the SH3 domain; the sequence is GQVKVYRALFTFDPRTPDELYFEEGDILYISDTSDSNWWKGTCRGRTGLIPSNYVAEQAE. ANK repeat units follow at residues 72–101, 105–135, and 139–168; these read SIDNPMHEAAKRGNLSWLRECLDNKVGING, AGNTSLYWACHGGHKDVVEILLSQPNCELNQ, and LGDTPLHAAAWKGYSDIVEMLLNKNARTDV.

It localises to the cytoplasm. Functionally, induces bone resorption, acting probably through a signaling cascade which results in the secretion of factor(s) enhancing osteoclast formation and activity. This Danio rerio (Zebrafish) protein is Osteoclast-stimulating factor 1 (ostf1).